The chain runs to 1018 residues: UPF0182 protein Francci3_3781 (1018 aa).

The next 7 helical transmembrane spans lie at 13 to 33, 60 to 80, 109 to 129, 167 to 187, 208 to 228, 250 to 270, and 283 to 303; these read TKVLVPVLLVIVLAITIIAIF, ILLFVLFGVVMAIIVGTNIVL, MLLILLAVTTLFGLAAGLSAA, FLLGFLLTAVLLSLLVTLLTH, AHISVLLGLLALLKAWAYYLD, AVLPAKLILLFISLACAVLFI, and LGAGILVLSSVVIGGIYPAIV. 2 stretches are compositionally biased toward low complexity: residues 886-896 and 960-980; these read TTDAGQDGTPA and SSPAATPPAATATRAGASVPA. 2 disordered regions span residues 886 to 920 and 960 to 1018; these read TTDAGQDGTPAPRSGQGGAGVPPPGQTALQDAVGD and SSPA…PAPG. The segment covering 981 to 995 has biased composition (pro residues); it reads SPVPASPAAKPPAPS.

The protein belongs to the UPF0182 family.

The protein resides in the cell membrane. The polypeptide is UPF0182 protein Francci3_3781 (Frankia casuarinae (strain DSM 45818 / CECT 9043 / HFP020203 / CcI3)).